The chain runs to 179 residues: Large ribosomal subunit protein uL6 (179 aa).

It belongs to the universal ribosomal protein uL6 family. In terms of assembly, part of the 50S ribosomal subunit.

Functionally, this protein binds to the 23S rRNA, and is important in its secondary structure. It is located near the subunit interface in the base of the L7/L12 stalk, and near the tRNA binding site of the peptidyltransferase center. This chain is Large ribosomal subunit protein uL6, found in Gemmatimonas aurantiaca (strain DSM 14586 / JCM 11422 / NBRC 100505 / T-27).